A 333-amino-acid chain; its full sequence is Ornithine carbamoyltransferase (333 aa).

Carbamoyl phosphate is bound by residues 56–59 (STRT), Gln83, Arg107, and 134–137 (HPTQ). Residues Asn167, Asp231, and 235–236 (SM) contribute to the L-ornithine site. Residues 273-274 (CL) and Arg318 contribute to the carbamoyl phosphate site.

It belongs to the aspartate/ornithine carbamoyltransferase superfamily. OTCase family.

The protein resides in the cytoplasm. It carries out the reaction carbamoyl phosphate + L-ornithine = L-citrulline + phosphate + H(+). The protein operates within amino-acid biosynthesis; L-arginine biosynthesis; L-arginine from L-ornithine and carbamoyl phosphate: step 1/3. Its function is as follows. Has vitronectin and fibronectin-binding activity. Functionally, reversibly catalyzes the transfer of the carbamoyl group from carbamoyl phosphate (CP) to the N(epsilon) atom of ornithine (ORN) to produce L-citrulline. This is Ornithine carbamoyltransferase (argF) from Staphylococcus epidermidis (strain ATCC 12228 / FDA PCI 1200).